Here is a 380-residue protein sequence, read N- to C-terminus: SAM and SH3 domain-containing protein 3 (380 aa).

2 disordered regions span residues Met1–Trp76 and Leu96–Pro168. Residues Leu22–Val41 show a composition bias toward low complexity. 3 positions are modified to phosphoserine: Ser27, Ser34, and Ser42. Residue Thr61 is modified to Phosphothreonine. At Ser97 the chain carries Phosphoserine. Thr103 is subject to Phosphothreonine. Ser110 is subject to Phosphoserine. Thr112 carries the phosphothreonine modification. Phosphoserine is present on residues Ser113 and Ser120. A compositionally biased stretch (polar residues) spans Leu141–Glu150. An SH3 domain is found at Pro173–Glu234. Residues Pro252–Tyr316 enclose the SAM domain. Position 318 is a phosphothreonine (Thr318). Over residues Thr318–Ala327 the composition is skewed to acidic residues. Residues Thr318–Pro380 form a disordered region. The residue at position 320 (Ser320) is a Phosphoserine. The span at Glu369–Pro380 shows a compositional bias: polar residues.

In terms of tissue distribution, preferentially expressed in lymphoid tissues. Expressed in bone marrow, thymus, spleen, lymph nodes and Peyer patches of gut. In the spleen and lymph nodes, expressed in both T- and B-cells. In the thymus, in the medulla and cortex.

Functionally, may function as a signaling adapter protein in lymphocytes. The protein is SAM and SH3 domain-containing protein 3 (Sash3) of Mus musculus (Mouse).